We begin with the raw amino-acid sequence, 614 residues long: Leucine aminopeptidase 2 (614 aa).

Residues 139-141 (QCQ) and 271-276 (PYGGME) contribute to the a peptide site. Histidine 300 lines the Zn(2+) pocket. Catalysis depends on glutamate 301, which acts as the Proton acceptor. Residues histidine 304 and glutamate 323 each contribute to the Zn(2+) site. Residue tyrosine 385 is the Proton donor of the active site.

This sequence belongs to the peptidase M1 family. Zn(2+) serves as cofactor.

It localises to the cytoplasm. The protein resides in the nucleus. The enzyme catalyses an epoxide + H2O = an ethanediol. Aminopeptidase that preferentially cleaves di- and tripeptides. Also has low epoxide hydrolase activity (in vitro). Can hydrolyze the epoxide leukotriene LTA(4) but it forms preferentially 5,6-dihydroxy-7,9,11,14-eicosatetraenoic acid rather than the cytokine leukotriene B(4) as the product compared to the homologous mammalian enzyme (in vitro). The polypeptide is Leucine aminopeptidase 2 (Aspergillus fumigatus (strain ATCC MYA-4609 / CBS 101355 / FGSC A1100 / Af293) (Neosartorya fumigata)).